Consider the following 773-residue polypeptide: Ribosomal protein S6 kinase alpha-4 (773 aa).

Positions 33–301 (FALLKVLGTG…AQEVKSHPFF (269 aa)) constitute a Protein kinase 1 domain. ATP is bound by residues 39-47 (LGTGAYGKV) and lysine 65. Aspartate 161 serves as the catalytic Proton acceptor. At serine 196 the chain carries Phosphoserine; by autocatalysis. Residues 302–371 (QGLDWVALAA…VAPSILFDHN (70 aa)) form the AGC-kinase C-terminal domain. Serine 343 carries the phosphoserine; by MAPK1, MAPK3 and MAPK14 modification. Phosphoserine is present on serine 347. 2 positions are modified to phosphoserine; by autocatalysis: serine 360 and serine 365. ATP is bound by residues 417–425 (LGQGSFSVC) and lysine 440. Residues 417–674 (LGQGSFSVCR…LEGLRSSSWL (258 aa)) enclose the Protein kinase 2 domain. Aspartate 530 (proton acceptor) is an active-site residue. At threonine 542 the chain carries Phosphothreonine. A Phosphothreonine; by MAPK1, MAPK3 and MAPK14 modification is found at threonine 568. 2 positions are modified to phosphoserine: serine 634 and serine 678. Disordered regions lie at residues 674 to 696 (LQDGSARSSPPLRTPDVLESSGP) and 728 to 773 (AKRR…LSPS). Threonine 687 bears the Phosphothreonine mark. Phosphoserine; by autocatalysis occurs at positions 737 and 745.

The protein belongs to the protein kinase superfamily. AGC Ser/Thr protein kinase family. S6 kinase subfamily. Forms a complex with either MAPK1/ERK2 or MAPK3/ERK1 in quiescent cells which transiently dissociates following mitogenic stimulation. Also associates with MAPK14/p38-alpha. Activated RPS6KA4 associates with and phosphorylates the NF-kappa-B p65 subunit RELA. It depends on Mg(2+) as a cofactor. Ser-343 and Thr-568 phosphorylation is required for kinase activity. Ser-343 and Ser-196 are autophosphorylated by the C-terminal kinase domain, and their phosphorylation is essential for the catalytic activity of the N-terminal kinase domain. Phosphorylated at Ser-343, Thr-568 and Thr-687 by MAPK1/ERK2, MAPK3/ERK1 and MAPK14/p38-alpha. Autophosphorylated at Ser-737 and Ser-745 by the N-terminal kinase domain.

The protein resides in the nucleus. It carries out the reaction L-seryl-[protein] + ATP = O-phospho-L-seryl-[protein] + ADP + H(+). It catalyses the reaction L-threonyl-[protein] + ATP = O-phospho-L-threonyl-[protein] + ADP + H(+). With respect to regulation, activated by phosphorylation at Ser-343, Thr-568 and Thr-687 by MAPK1/ERK2, MAPK3/ERK1 and MAPK14/p38-alpha, and by further autophosphorylation of Ser-196, Ser-360 and Ser-365 by the activated C-terminal kinase domain. Its function is as follows. Serine/threonine-protein kinase that is required for the mitogen or stress-induced phosphorylation of the transcription factors CREB1 and ATF1 and for the regulation of the transcription factor RELA, and that contributes to gene activation by histone phosphorylation and functions in the regulation of inflammatory genes. Phosphorylates CREB1 and ATF1 in response to mitogenic or stress stimuli such as UV-C irradiation, epidermal growth factor (EGF) and anisomycin. Plays an essential role in the control of RELA transcriptional activity in response to TNF. Phosphorylates 'Ser-10' of histone H3 in response to mitogenics, stress stimuli and EGF, which results in the transcriptional activation of several immediate early genes, including proto-oncogenes c-fos/FOS and c-jun/JUN. May also phosphorylate 'Ser-28' of histone H3. Mediates the mitogen- and stress-induced phosphorylation of high mobility group protein 1 (HMGN1/HMG14). In lipopolysaccharide-stimulated primary macrophages, acts downstream of the Toll-like receptor TLR4 to limit the production of pro-inflammatory cytokines. Functions probably by inducing transcription of the MAP kinase phosphatase DUSP1 and the anti-inflammatory cytokine interleukin 10 (IL10), via CREB1 and ATF1 transcription factors. In Mus musculus (Mouse), this protein is Ribosomal protein S6 kinase alpha-4 (Rps6ka4).